Reading from the N-terminus, the 423-residue chain is Serine--tRNA ligase 1 (423 aa).

231–233 contacts L-serine; the sequence is TAE. Residue 262-264 coordinates ATP; that stretch reads RSE. An L-serine-binding site is contributed by E285. 349–352 provides a ligand contact to ATP; sequence EISS. S384 lines the L-serine pocket.

It belongs to the class-II aminoacyl-tRNA synthetase family. Type-1 seryl-tRNA synthetase subfamily. In terms of assembly, homodimer. The tRNA molecule binds across the dimer.

It localises to the cytoplasm. It carries out the reaction tRNA(Ser) + L-serine + ATP = L-seryl-tRNA(Ser) + AMP + diphosphate + H(+). The enzyme catalyses tRNA(Sec) + L-serine + ATP = L-seryl-tRNA(Sec) + AMP + diphosphate + H(+). The protein operates within aminoacyl-tRNA biosynthesis; selenocysteinyl-tRNA(Sec) biosynthesis; L-seryl-tRNA(Sec) from L-serine and tRNA(Sec): step 1/1. Catalyzes the attachment of serine to tRNA(Ser). Is also able to aminoacylate tRNA(Sec) with serine, to form the misacylated tRNA L-seryl-tRNA(Sec), which will be further converted into selenocysteinyl-tRNA(Sec). This is Serine--tRNA ligase 1 from Enterococcus faecalis (strain ATCC 700802 / V583).